The chain runs to 280 residues: Nuclear egress protein 1 (280 aa).

The CCCH-type zinc finger occupies 86–203 (CLTLSPYGHS…YIIFTSLTLH (118 aa)).

The protein belongs to the herpesviridae NEC1 protein family. As to quaternary structure, forms a heterohexameric complex with NEC2. Interacts with capsid vertex specific component 2/CVC2; this interaction directs the capsid to the host inner nuclear membrane to initiate budding. Post-translationally, phosphorylated at serine residues in the N-terminus. This phosphorylation regulates the localization within the inner nuclear membrane.

It localises to the host nucleus inner membrane. Its function is as follows. Plays an essential role in virion nuclear egress, the first step of virion release from infected cell. Within the host nucleus, NEC1 interacts with the newly formed capsid through the vertexes and directs it to the inner nuclear membrane by associating with NEC2. Induces the budding of the capsid at the inner nuclear membrane as well as its envelopment into the perinuclear space. There, the NEC1/NEC2 complex promotes the fusion of the enveloped capsid with the outer nuclear membrane and the subsequent release of the viral capsid into the cytoplasm where it will reach the secondary budding sites in the host Golgi or trans-Golgi network. The polypeptide is Nuclear egress protein 1 (Alcelaphine herpesvirus 1 (strain C500) (AlHV-1)).